We begin with the raw amino-acid sequence, 547 residues long: Chaperonin GroEL (547 aa).

ATP contacts are provided by residues 30-33, Lys51, 87-91, Gly415, and Asp495; these read TLGP and DGTTT.

Belongs to the chaperonin (HSP60) family. Forms a cylinder of 14 subunits composed of two heptameric rings stacked back-to-back. Interacts with the co-chaperonin GroES.

The protein localises to the cytoplasm. It catalyses the reaction ATP + H2O + a folded polypeptide = ADP + phosphate + an unfolded polypeptide.. Its function is as follows. Together with its co-chaperonin GroES, plays an essential role in assisting protein folding. The GroEL-GroES system forms a nano-cage that allows encapsulation of the non-native substrate proteins and provides a physical environment optimized to promote and accelerate protein folding. The sequence is that of Chaperonin GroEL from Aggregatibacter actinomycetemcomitans (Actinobacillus actinomycetemcomitans).